Here is a 506-residue protein sequence, read N- to C-terminus: Histidine ammonia-lyase (506 aa).

Residues A143–G145 constitute a cross-link (5-imidazolinone (Ala-Gly)). S144 is modified (2,3-didehydroalanine (Ser)).

This sequence belongs to the PAL/histidase family. In terms of processing, contains an active site 4-methylidene-imidazol-5-one (MIO), which is formed autocatalytically by cyclization and dehydration of residues Ala-Ser-Gly.

The protein resides in the cytoplasm. It catalyses the reaction L-histidine = trans-urocanate + NH4(+). It participates in amino-acid degradation; L-histidine degradation into L-glutamate; N-formimidoyl-L-glutamate from L-histidine: step 1/3. The polypeptide is Histidine ammonia-lyase (Salmonella gallinarum (strain 287/91 / NCTC 13346)).